The sequence spans 660 residues: WD repeat-containing protein 48 homolog (660 aa).

WD repeat units follow at residues 23 to 78 (MHRS…RDLH), 84 to 120 (HHTD…CMST), 123 to 162 (THRD…KLTA), 174 to 213 (GNKD…KLMK), 216 to 255 (GHTD…CISS), 258 to 297 (CHSE…TAQL), 300 to 341 (IEDA…ISVE), and 362 to 401 (PGAA…KVCD).

It belongs to the WD repeat WDR48 family.

Its function is as follows. Regulator of deubiquitinating complexes. Activates deubiquitination by increasing the catalytic turnover without increasing the affinity of deubiquitinating enzymes for the substrate. In Brugia malayi (Filarial nematode worm), this protein is WD repeat-containing protein 48 homolog.